Consider the following 449-residue polypeptide: Sensor protein QseC (449 aa).

The Cytoplasmic segment spans residues 1-12 (MKLTQRLSLRVR). A helical membrane pass occupies residues 13–33 (LTLIFLILVSITWAISSFVAW). Over 34–161 (RKTTDNVDEL…REDMALAIVA (128 aa)) the chain is Periplasmic. Residues 162 to 182 (AQLTPWLIALPFMLLILLLLL) form a helical membrane-spanning segment. In terms of domain architecture, HAMP spans 183 to 235 (HRELRPLKKLAQALRFRSPESETPLDAKGVPSEVRPLVEALNQLFSRIHSMMV). Residues 183 to 449 (HRELRPLKKL…EGGFEAVVRW (267 aa)) lie on the Cytoplasmic side of the membrane. The region spanning 243 to 449 (DAAHELRSPL…EGGFEAVVRW (207 aa)) is the Histidine kinase domain. H246 carries the phosphohistidine; by autocatalysis modification.

It localises to the cell inner membrane. It carries out the reaction ATP + protein L-histidine = ADP + protein N-phospho-L-histidine.. In terms of biological role, member of a two-component regulatory system QseB/QseC. Activates the flagella regulon by activating transcription of FlhDC. May activate QseB by phosphorylation. This chain is Sensor protein QseC (qseC), found in Salmonella typhi.